We begin with the raw amino-acid sequence, 549 residues long: Glucose-6-phosphate isomerase (549 aa).

E353 functions as the Proton donor in the catalytic mechanism. Active-site residues include H384 and K513.

The protein belongs to the GPI family.

The protein localises to the cytoplasm. The enzyme catalyses alpha-D-glucose 6-phosphate = beta-D-fructose 6-phosphate. It functions in the pathway carbohydrate biosynthesis; gluconeogenesis. The protein operates within carbohydrate degradation; glycolysis; D-glyceraldehyde 3-phosphate and glycerone phosphate from D-glucose: step 2/4. Catalyzes the reversible isomerization of glucose-6-phosphate to fructose-6-phosphate. The chain is Glucose-6-phosphate isomerase from Brucella ovis (strain ATCC 25840 / 63/290 / NCTC 10512).